Here is a 494-residue protein sequence, read N- to C-terminus: V-type proton ATPase subunit B (494 aa).

Residue Arg-384 coordinates ATP.

Belongs to the ATPase alpha/beta chains family. V-ATPase is a heteromultimeric enzyme made up of two complexes: the ATP-hydrolytic V1 complex and the proton translocation V0 complex. The V1 complex consists of three catalytic AB heterodimers that form a heterohexamer, three peripheral stalks each consisting of EG heterodimers, one central rotor including subunits D and F, and the regulatory subunits C and H. The proton translocation complex V0 consists of the proton transport subunit a, a ring of proteolipid subunits c9c'', rotary subunit d, subunits e and f, and the accessory subunits VhaAC45 and ATP6AP2.

Functionally, non-catalytic subunit of the V1 complex of vacuolar(H+)-ATPase (V-ATPase), a multisubunit enzyme composed of a peripheral complex (V1) that hydrolyzes ATP and a membrane integral complex (V0) that translocates protons. V-ATPase is responsible for acidifying and maintaining the pH of intracellular compartments and in some cell types, is targeted to the plasma membrane, where it is responsible for acidifying the extracellular environment. Essential for the proper assembly and activity of V-ATPase. The chain is V-type proton ATPase subunit B (VHA55) from Heliothis virescens (Tobacco budworm moth).